Consider the following 460-residue polypeptide: Jacalin-related lectin 36 (460 aa).

The 131-residue stretch at 1–131 (MAAATMSWDD…LNSIDVHFAP (131 aa)) folds into the Jacalin-type lectin 1 domain. Position 2 is an N-acetylalanine (A2). Disordered regions lie at residues 34 to 57 (YDGDTHNPHHHGTPGKKSDGVSLS), 133 to 162 (PSSSSSSSSLSQANKVDAQGGKGGTSWDDG), and 291 to 334 (SGRG…PHEG). The span at 133–143 (PSSSSSSSSLS) shows a compositional bias: low complexity. Residues 145–289 (ANKVDAQGGK…LNALGAYFAP (145 aa)) enclose the Jacalin-type lectin 2 domain. Positions 292–309 (GRGTPSATQPPGSAQPTG) are enriched in polar residues. In terms of domain architecture, Jacalin-type lectin 3 spans 313–457 (AKKLEAKGGN…IHQVGVHVKP (145 aa)).

The protein belongs to the jacalin lectin family.

In Arabidopsis thaliana (Mouse-ear cress), this protein is Jacalin-related lectin 36 (JAL36).